The primary structure comprises 313 residues: Pyrimidine-specific ribonucleoside hydrolase RihB (313 aa).

D11 acts as the Proton acceptor in catalysis. D11, D16, and V124 together coordinate Ca(2+). Substrate is bound by residues Q227 and H239. Ca(2+) is bound at residue D240.

It belongs to the IUNH family. RihB subfamily. Homotetramer. Ca(2+) is required as a cofactor.

It catalyses the reaction a pyrimidine ribonucleoside + H2O = a pyrimidine nucleobase + D-ribose. Its function is as follows. Hydrolyzes cytidine or uridine to ribose and cytosine or uracil, respectively. Has a clear preference for cytidine over uridine. Strictly specific for ribonucleosides. The polypeptide is Pyrimidine-specific ribonucleoside hydrolase RihB (Escherichia coli O157:H7).